A 278-amino-acid chain; its full sequence is MNASTARMLNKICTYLFLTLLSIVIIYPLLITASSAFRVGNSAAFQLDFSGSWTLDHFKRLFDETLYLNWYSNTLVIALSVMVLQVTIVTLAGYSYSRYRFAGRKKSLIFFLIIQMVPTMAALTAFYVLAMLIGALDQYWFLTAIYIGGGIPMNTWLMKGYFDTVPREIDEAARIDGAGHLRIFASIVLPLVKPMLAVQALWAFMAPFGDYLLTKFLLRSPERLTIAVGLQSFISNPQQQKVALFAAGAILAALPICVLFFFLQKNFVSGLTAGGTKG.

Helical transmembrane passes span 12–32 (ICTYLFLTLLSIVIIYPLLIT), 74–94 (TLVIALSVMVLQVTIVTLAGY), 108–128 (LIFFLIIQMVPTMAALTAFYV), 131–151 (MLIGALDQYWFLTAIYIGGGI), 183–203 (IFASIVLPLVKPMLAVQALWA), and 242–262 (VALFAAGAILAALPICVLFFF). The ABC transmembrane type-1 domain occupies 71-263 (YSNTLVIALS…LPICVLFFFL (193 aa)).

Belongs to the binding-protein-dependent transport system permease family. MalFG subfamily. The complex is composed of two ATP-binding proteins (MsmX), two transmembrane proteins (MdxF and MdxG) and a solute-binding protein (MdxE).

It localises to the cell membrane. Part of the ABC transporter complex involved in maltodextrin import. Probably responsible for the translocation of the substrate across the membrane. The polypeptide is Maltodextrin transport system permease protein MdxG (mdxG) (Bacillus subtilis (strain 168)).